Here is a 347-residue protein sequence, read N- to C-terminus: KRR1 small subunit processome component homolog (347 aa).

The KH domain maps to G124–N194. Residues N231–K246 show a composition bias toward basic residues. The tract at residues N231–S347 is disordered. Residues F271–F304 are a coiled coil. Basic and acidic residues-rich tracts occupy residues L272 to D303 and K318 to V329. Over residues K337–S347 the composition is skewed to basic residues.

This sequence belongs to the KRR1 family. In terms of assembly, monomer. Component of the ribosomal small subunit (SSU) processome.

It is found in the nucleus. It localises to the nucleolus. Required for 40S ribosome biogenesis. Involved in nucleolar processing of pre-18S ribosomal RNA and ribosome assembly. Binds to RNA. Required for female germline development, cell viability during eye development and for survival of dividing cells and epithelial cells during early wing disk development. This is KRR1 small subunit processome component homolog from Drosophila willistoni (Fruit fly).